A 401-amino-acid chain; its full sequence is Probable plasmid-partitioning protein ParB (401 aa).

Positions 232 to 272 (KTRGKENARDKAAAVKEEVKPSKKPKADNGEKTPKGRSHEE) are disordered.

The protein belongs to the ParB family.

This chain is Probable plasmid-partitioning protein ParB, found in Xylella fastidiosa (strain 9a5c).